A 159-amino-acid polypeptide reads, in one-letter code: Abscisic acid and environmental stress-inducible protein (159 aa).

6 tandem repeats follow at residues 38–49 (GGGYNHGGGGYN), 50–61 (GGGYNHGGGGYN), 63–74 (GGGYNHGGGGYN), 77–88 (GGGYNHGGGGYN), 91–102 (GGGYNHGGGGYN), and 105–116 (GGGYNHGGGGYN). Residues 38–135 (GGGYNHGGGG…GYNHGGGGCQ (98 aa)) are 7 X 12 AA repeats of G-G-G-Y-N-H-G-G-G-Y-N. Residues 124–135 (GGGYNHGGGGCQ) form a 7; approximate repeat.

This sequence belongs to the GRP family.

The polypeptide is Abscisic acid and environmental stress-inducible protein (Medicago sativa subsp. falcata (Sickle medic)).